The primary structure comprises 64 residues: Large ribosomal subunit protein bL32 (64 aa).

Residues 1-35 (MAVQKSRVTPSRRGQRRSHDALTAKQLSTDPTSGE) form a disordered region.

This sequence belongs to the bacterial ribosomal protein bL32 family.

The chain is Large ribosomal subunit protein bL32 from Xanthomonas axonopodis pv. citri (strain 306).